The chain runs to 89 residues: uncharacterized protein (89 aa).

The chain crosses the membrane as a helical span at residues 39–61 (FVCFWSIWFWTGDISFSLLSMLV).

Its subcellular location is the membrane. This is an uncharacterized protein from Saccharomyces cerevisiae (strain ATCC 204508 / S288c) (Baker's yeast).